The following is a 495-amino-acid chain: MEFLVKSVRPETLKTATLVLAVGEGRKLGASAKAVDDATGGAISAVLKRGDLAGKVGQTLLLQSLPNLKAERVLLVGAGKERELGDRQYRKLASAVLSTLKGLAGADAALALGDLAVKGRDAHAKARLLVETLADGLYVFDRYKSQKAEPLKLKKLTLLADKADSAAVEQGSKEAQAIANGMALTRDLGNLPPNVCHPTFLGEQAKGLAKEFKGLKVEVLDEKKLRELGMGSFLAVAQGSDQPPRLIVLQYNGAKKDQAPHVLVGKGITFDTGGISLKPGLGMDEMKFDMCGAASVFGTFRAVLELQLPINLVGLLACAENMPSGGATRPGDIVTTMSGQTVEILNTDAEGRLVLCDALTYAERFKPQSVIDIATLTGACIVALGSNTSGLMGNNEALVRQLLKAGEFADDRAWQLPLFDEYQEQLDSPFADIANIGGPKAGTITAGCFLSRFAKKYHWAHLDIAGTAWISGGKDKGATGRPVPLLTQYLLERAK.

2 residues coordinate Mn(2+): Lys266 and Asp271. Residue Lys278 is part of the active site. Mn(2+) contacts are provided by Asp289, Asp348, and Glu350. The active site involves Arg352.

This sequence belongs to the peptidase M17 family. Mn(2+) is required as a cofactor.

Its subcellular location is the cytoplasm. The enzyme catalyses Release of an N-terminal amino acid, Xaa-|-Yaa-, in which Xaa is preferably Leu, but may be other amino acids including Pro although not Arg or Lys, and Yaa may be Pro. Amino acid amides and methyl esters are also readily hydrolyzed, but rates on arylamides are exceedingly low.. It catalyses the reaction Release of an N-terminal amino acid, preferentially leucine, but not glutamic or aspartic acids.. Presumably involved in the processing and regular turnover of intracellular proteins. Catalyzes the removal of unsubstituted N-terminal amino acids from various peptides. This is Probable cytosol aminopeptidase from Pseudomonas aeruginosa (strain LESB58).